A 276-amino-acid polypeptide reads, in one-letter code: Protease HtpX homolog (276 aa).

The helical transmembrane segment at 14 to 34 (IVLFALIGQALGGTGGMLLAF) threads the bilayer. H130 lines the Zn(2+) pocket. E131 is an active-site residue. Residue H134 coordinates Zn(2+). 2 helical membrane passes run 145–165 (VAAT…FFGG) and 171–191 (LVSL…QSAI). E196 lines the Zn(2+) pocket.

This sequence belongs to the peptidase M48B family. Zn(2+) serves as cofactor.

The protein localises to the cell inner membrane. In Salinibacter ruber (strain DSM 13855 / M31), this protein is Protease HtpX homolog.